The chain runs to 454 residues: MALNVVILAAGKGTRMRSDLPKVLHPIAHKSMVQHVIDTAHCIGSDAIQLVYGYGADKLKLALGEQQLNWMLQAEQLGTGHAVAQAIPNIDDNDTVLILYGDVPLIQASTLEALLAARPDQGVAILTVNLSNPTGYGRIVREQGKVVGIVEQKDANAEQLAINEINTGIMAVPGKALKTWLGRLSNNNAQGEYYLTDIIAMAHADGVEINTAQPQSAIEVEGANNRVQLAQLERAYQAREAEKLMIAGANLRDPSRIDIRGEVTVGMDVMVDVNVIFEGKVVIGNNVSIGAGAILIDCEIADNAEIKPYSIIEGAKLGVAASAGPFARLRPGAELMQDAHIGNFVEMKKAVLGVGSKAGHLAYLGDAQIGAGVNIGAGTITCNYDGANKHLTVIEDNVFVGSDTQLVAPVTIGKGATLGAGSTITRDVGEDELVITRVKQKHLTGWQRPVKIKE.

The segment at 1–226 (MALNVVILAA…AIEVEGANNR (226 aa)) is pyrophosphorylase. UDP-N-acetyl-alpha-D-glucosamine contacts are provided by residues 8–11 (LAAG), K22, Q73, 78–79 (GT), 100–102 (YGD), G137, E151, N166, and N224. Residue D102 participates in Mg(2+) binding. Residue N224 participates in Mg(2+) binding. The tract at residues 227–247 (VQLAQLERAYQAREAEKLMIA) is linker. Residues 248–454 (GANLRDPSRI…GWQRPVKIKE (207 aa)) form an N-acetyltransferase region. The UDP-N-acetyl-alpha-D-glucosamine site is built by R330 and K348. The Proton acceptor role is filled by H360. 2 residues coordinate UDP-N-acetyl-alpha-D-glucosamine: Y363 and N374. Acetyl-CoA-binding positions include A377, 383–384 (NY), S402, A420, and R437.

The protein in the N-terminal section; belongs to the N-acetylglucosamine-1-phosphate uridyltransferase family. In the C-terminal section; belongs to the transferase hexapeptide repeat family. In terms of assembly, homotrimer. It depends on Mg(2+) as a cofactor.

It localises to the cytoplasm. It carries out the reaction alpha-D-glucosamine 1-phosphate + acetyl-CoA = N-acetyl-alpha-D-glucosamine 1-phosphate + CoA + H(+). The catalysed reaction is N-acetyl-alpha-D-glucosamine 1-phosphate + UTP + H(+) = UDP-N-acetyl-alpha-D-glucosamine + diphosphate. The protein operates within nucleotide-sugar biosynthesis; UDP-N-acetyl-alpha-D-glucosamine biosynthesis; N-acetyl-alpha-D-glucosamine 1-phosphate from alpha-D-glucosamine 6-phosphate (route II): step 2/2. It participates in nucleotide-sugar biosynthesis; UDP-N-acetyl-alpha-D-glucosamine biosynthesis; UDP-N-acetyl-alpha-D-glucosamine from N-acetyl-alpha-D-glucosamine 1-phosphate: step 1/1. Its pathway is bacterial outer membrane biogenesis; LPS lipid A biosynthesis. In terms of biological role, catalyzes the last two sequential reactions in the de novo biosynthetic pathway for UDP-N-acetylglucosamine (UDP-GlcNAc). The C-terminal domain catalyzes the transfer of acetyl group from acetyl coenzyme A to glucosamine-1-phosphate (GlcN-1-P) to produce N-acetylglucosamine-1-phosphate (GlcNAc-1-P), which is converted into UDP-GlcNAc by the transfer of uridine 5-monophosphate (from uridine 5-triphosphate), a reaction catalyzed by the N-terminal domain. In Shewanella sp. (strain MR-7), this protein is Bifunctional protein GlmU.